The sequence spans 293 residues: Ribosomal protein L11 methyltransferase (293 aa).

S-adenosyl-L-methionine-binding residues include threonine 145, glycine 166, aspartate 188, and asparagine 230.

The protein belongs to the methyltransferase superfamily. PrmA family.

The protein localises to the cytoplasm. It catalyses the reaction L-lysyl-[protein] + 3 S-adenosyl-L-methionine = N(6),N(6),N(6)-trimethyl-L-lysyl-[protein] + 3 S-adenosyl-L-homocysteine + 3 H(+). Functionally, methylates ribosomal protein L11. The polypeptide is Ribosomal protein L11 methyltransferase (Haemophilus ducreyi (strain 35000HP / ATCC 700724)).